Consider the following 230-residue polypeptide: Cytidylate kinase (230 aa).

10 to 18 (GPAGSGKST) provides a ligand contact to ATP.

Belongs to the cytidylate kinase family. Type 1 subfamily.

The protein localises to the cytoplasm. It carries out the reaction CMP + ATP = CDP + ADP. It catalyses the reaction dCMP + ATP = dCDP + ADP. This is Cytidylate kinase from Leptospira borgpetersenii serovar Hardjo-bovis (strain L550).